Consider the following 197-residue polypeptide: dITP/XTP pyrophosphatase (197 aa).

11-16 (SHNAGK) contributes to the substrate binding site. Residues Glu42 and Asp71 each coordinate Mg(2+). Residue Asp71 is the Proton acceptor of the active site. Substrate contacts are provided by residues Ser72, 155-158 (FGYD), Lys178, and 183-184 (HR).

Belongs to the HAM1 NTPase family. As to quaternary structure, homodimer. The cofactor is Mg(2+).

The enzyme catalyses XTP + H2O = XMP + diphosphate + H(+). It catalyses the reaction dITP + H2O = dIMP + diphosphate + H(+). The catalysed reaction is ITP + H2O = IMP + diphosphate + H(+). Pyrophosphatase that catalyzes the hydrolysis of nucleoside triphosphates to their monophosphate derivatives, with a high preference for the non-canonical purine nucleotides XTP (xanthosine triphosphate), dITP (deoxyinosine triphosphate) and ITP. Seems to function as a house-cleaning enzyme that removes non-canonical purine nucleotides from the nucleotide pool, thus preventing their incorporation into DNA/RNA and avoiding chromosomal lesions. In Pseudomonas aeruginosa (strain ATCC 15692 / DSM 22644 / CIP 104116 / JCM 14847 / LMG 12228 / 1C / PRS 101 / PAO1), this protein is dITP/XTP pyrophosphatase.